A 410-amino-acid chain; its full sequence is LL-diaminopimelate aminotransferase (410 aa).

Residues Tyr15 and Gly42 each contribute to the substrate site. Residues Tyr72, 108–109, Tyr132, Asn186, Tyr217, and 245–247 contribute to the pyridoxal 5'-phosphate site; these read TK and SFS. Residues Lys109, Tyr132, and Asn186 each contribute to the substrate site. Lys248 is subject to N6-(pyridoxal phosphate)lysine. Residues Arg256 and Asn291 each contribute to the pyridoxal 5'-phosphate site. Positions 291 and 387 each coordinate substrate.

The protein belongs to the class-I pyridoxal-phosphate-dependent aminotransferase family. LL-diaminopimelate aminotransferase subfamily. In terms of assembly, homodimer. Pyridoxal 5'-phosphate is required as a cofactor.

The catalysed reaction is (2S,6S)-2,6-diaminopimelate + 2-oxoglutarate = (S)-2,3,4,5-tetrahydrodipicolinate + L-glutamate + H2O + H(+). Its pathway is amino-acid biosynthesis; L-lysine biosynthesis via DAP pathway; LL-2,6-diaminopimelate from (S)-tetrahydrodipicolinate (aminotransferase route): step 1/1. In terms of biological role, involved in the synthesis of meso-diaminopimelate (m-DAP or DL-DAP), required for both lysine and peptidoglycan biosynthesis. Catalyzes the direct conversion of tetrahydrodipicolinate to LL-diaminopimelate. The protein is LL-diaminopimelate aminotransferase of Lawsonia intracellularis (strain PHE/MN1-00).